The primary structure comprises 694 residues: Two-component response regulator ORR25 (694 aa).

The 116-residue stretch at 17–132 folds into the Response regulatory domain; it reads RVLAVDDSPV…DIQNIWQHVW (116 aa). 4-aspartylphosphate is present on Asp-68. The 60-residue stretch at 183-242 folds into the HTH myb-type domain; that stretch reads TLKRQRVVWTPELHRDFVIAVHELGVDRAVPRKILRMMKVDYMTRENIASHLQKYRLYLK. The segment at residues 213 to 238 is a DNA-binding region (H-T-H motif); the sequence is PRKILRMMKVDYMTRENIASHLQKYR. Positions 326–349 are disordered; the sequence is VGHGGSPGNNPVFQPLQNSSNARK. The segment covering 333 to 347 has biased composition (polar residues); that stretch reads GNNPVFQPLQNSSNA.

It belongs to the ARR family. Type-B subfamily. In terms of processing, two-component system major event consists of a His-to-Asp phosphorelay between a sensor histidine kinase (HK) and a response regulator (RR). In plants, the His-to-Asp phosphorelay involves an additional intermediate named Histidine-containing phosphotransfer protein (HPt). This multistep phosphorelay consists of a His-Asp-His-Asp sequential transfer of a phosphate group between first a His and an Asp of the HK protein, followed by the transfer to a conserved His of the HPt protein and finally the transfer to an Asp in the receiver domain of the RR protein.

It localises to the nucleus. Transcriptional activator that binds specific DNA sequence. Functions as a response regulator involved in His-to-Asp phosphorelay signal transduction system. Phosphorylation of the Asp residue in the receiver domain activates the ability of the protein to promote the transcription of target genes. May directly activate some type-A response regulators in response to cytokinins. This is Two-component response regulator ORR25 from Oryza sativa subsp. japonica (Rice).